The following is an 856-amino-acid chain: Lon protease (856 aa).

The Lon N-terminal domain maps to 68–261; sequence FPVLPLRDIV…KVLGLMESEI (194 aa). 412–419 lines the ATP pocket; sequence GPPGVGKT. Residues 647–828 form the Lon proteolytic domain; it reads EDQVGVVTGL…DEVLHHALLR (182 aa). Residues Ser-734 and Lys-777 contribute to the active site.

It belongs to the peptidase S16 family. In terms of assembly, homohexamer. Organized in a ring with a central cavity.

The protein localises to the cytoplasm. The catalysed reaction is Hydrolysis of proteins in presence of ATP.. Functionally, ATP-dependent serine protease that mediates the selective degradation of mutant and abnormal proteins as well as certain short-lived regulatory proteins. Required for cellular homeostasis and for survival from DNA damage and developmental changes induced by stress. Degrades polypeptides processively to yield small peptide fragments that are 5 to 10 amino acids long. Binds to DNA in a double-stranded, site-specific manner. This is Lon protease from Azorhizobium caulinodans (strain ATCC 43989 / DSM 5975 / JCM 20966 / LMG 6465 / NBRC 14845 / NCIMB 13405 / ORS 571).